The sequence spans 326 residues: Putative UPF0725 protein At1g28500 (326 aa).

Positions 301-320 (KDTEQRSKTRQSEEKVESSQ) are enriched in basic and acidic residues. The tract at residues 301–326 (KDTEQRSKTRQSEEKVESSQKRSRLC) is disordered.

It belongs to the UPF0725 (EMB2204) family.

This Arabidopsis thaliana (Mouse-ear cress) protein is Putative UPF0725 protein At1g28500.